A 477-amino-acid polypeptide reads, in one-letter code: Acylamidase (477 aa).

Residues K82 and S157 each act as charge relay system in the active site. S181 (acyl-ester intermediate) is an active-site residue.

It belongs to the amidase family.

The catalysed reaction is a monocarboxylic acid amide + H2O = a monocarboxylate + NH4(+). It carries out the reaction an anilide + H2O = aniline + a carboxylate + H(+). It catalyses the reaction an N-acyl-L-amino acid + H2O = an L-alpha-amino acid + a carboxylate. The enzyme catalyses an N-acetyl-L-cysteine-S-conjugate + H2O = an S-substituted L-cysteine + acetate. Amidase activity is completely suppressed by inhibitors of serine proteases (phenylmethylsulfonyl fluoride and diisopropyl fluorophosphate), partially inhibited by copper and mercury ions, but is not affected by inhibitors of aliphatic amidases (acetaldehyde and nitrophenyl disulfides) or by EDTA. Its function is as follows. Amidase with broad substrate specificity, catalyzing the hydrolysis of a wide range of N-substituted amides, and, to a lesser extent, the hydrolysis of non-substituted amides. Acid para-nitroanilides (4'-nitroacetanilide, Gly-pNA, Ala-pNA, Leu-pNA) are the best substrates for this enzyme. N-substituted acrylamides (isopropyl acrylamide, N,N-dimethyl-aminopropyl acrylamide, and methylene-bis-acrylamide), N-acetyl derivatives of glycine, alanine and leucine, and aliphatic amides (acetamide, acrylamide, isobutyramide, n-butyramide, and valeramide) can also be used as substrates but with less efficiency. The sequence is that of Acylamidase from Rhodococcus erythropolis (Arthrobacter picolinophilus).